Here is a 405-residue protein sequence, read N- to C-terminus: Argininosuccinate synthase (405 aa).

ATP is bound by residues 10 to 18 and Ala-37; that span reads AYSGGLDTS. Tyr-88 and Ser-93 together coordinate L-citrulline. Position 118 (Gly-118) interacts with ATP. L-aspartate contacts are provided by Thr-120, Asn-124, and Asp-125. Asn-124 is an L-citrulline binding site. 5 residues coordinate L-citrulline: Arg-128, Ser-179, Ser-188, Glu-264, and Tyr-276.

The protein belongs to the argininosuccinate synthase family. Type 1 subfamily. Homotetramer.

It is found in the cytoplasm. It carries out the reaction L-citrulline + L-aspartate + ATP = 2-(N(omega)-L-arginino)succinate + AMP + diphosphate + H(+). It participates in amino-acid biosynthesis; L-arginine biosynthesis; L-arginine from L-ornithine and carbamoyl phosphate: step 2/3. The chain is Argininosuccinate synthase from Pseudomonas putida (strain GB-1).